A 238-amino-acid chain; its full sequence is Fmr1 neighbor protein (238 aa).

The interval 1–30 is disordered; sequence MPSDRRPSQRRNRSKSRDYRGARSKVTRAD. At 1-79 the chain is on the cytoplasmic side; it reads MPSDRRPSQR…CLQYLWARRH (79 aa). The segment covering 15-30 has biased composition (basic and acidic residues); the sequence is KSRDYRGARSKVTRAD. A helical transmembrane segment spans residues 80-100; the sequence is LGLLLLLFWTLVILFRPVNTA. Residues 101 to 178 lie on the Extracellular side of the membrane; sequence KLPILAEAAE…VRDKPTQVLR (78 aa). Residues 118–176 enclose the P-type domain; the sequence is MLDFFFPTACIIRDNQVVVACNNQPYLSESECLKSKCCSSTSGTIIKCYAPVRDKPTQV. A helical transmembrane segment spans residues 179-199; the sequence is VFGLAAISILVLGFLPMCCCS. Over 200–238 the chain is Cytoplasmic; sequence MCWRRKRMNRMLKVLKKQKSKGKKPKGRKASEERALLSH. Basic residues predominate over residues 214-227; the sequence is LKKQKSKGKKPKGR. Residues 214–238 are disordered; the sequence is LKKQKSKGKKPKGRKASEERALLSH. Positions 228 to 238 are enriched in basic and acidic residues; that stretch reads KASEERALLSH.

Its subcellular location is the membrane. The polypeptide is Fmr1 neighbor protein (Mus musculus (Mouse)).